The chain runs to 161 residues: Endoribonuclease YbeY (161 aa).

Zn(2+) contacts are provided by His-121, His-125, and His-131.

Belongs to the endoribonuclease YbeY family. It depends on Zn(2+) as a cofactor.

The protein resides in the cytoplasm. In terms of biological role, single strand-specific metallo-endoribonuclease involved in late-stage 70S ribosome quality control and in maturation of the 3' terminus of the 16S rRNA. This Xylella fastidiosa (strain M23) protein is Endoribonuclease YbeY.